The primary structure comprises 345 residues: Fe(3+) ions import ATP-binding protein FbpC (345 aa).

An ABC transporter domain is found at 3 to 233 (LSLKAATVRF…PADEFVARFL (231 aa)). 35-42 (GPSGSGKS) serves as a coordination point for ATP.

This sequence belongs to the ABC transporter superfamily. Fe(3+) ion importer (TC 3.A.1.10) family. In terms of assembly, the complex is composed of two ATP-binding proteins (FbpC), two transmembrane proteins (FbpB) and a solute-binding protein (FbpA).

It is found in the cell membrane. The enzyme catalyses Fe(3+)(out) + ATP + H2O = Fe(3+)(in) + ADP + phosphate + H(+). Its function is as follows. Part of the ABC transporter complex FbpABC involved in Fe(3+) ions import. Responsible for energy coupling to the transport system. This chain is Fe(3+) ions import ATP-binding protein FbpC, found in Streptomyces avermitilis (strain ATCC 31267 / DSM 46492 / JCM 5070 / NBRC 14893 / NCIMB 12804 / NRRL 8165 / MA-4680).